The following is a 123-amino-acid chain: Putative iron-sulfur cluster insertion protein ErpA (123 aa).

Iron-sulfur cluster contacts are provided by Cys51, Cys115, and Cys117.

This sequence belongs to the HesB/IscA family. As to quaternary structure, homodimer. It depends on iron-sulfur cluster as a cofactor.

In terms of biological role, required for insertion of 4Fe-4S clusters. The sequence is that of Putative iron-sulfur cluster insertion protein ErpA from Burkholderia cenocepacia (strain HI2424).